The chain runs to 515 residues: 1-pyrroline-5-carboxylate dehydrogenase (515 aa).

Active-site residues include glutamate 286 and cysteine 320.

Belongs to the aldehyde dehydrogenase family. RocA subfamily.

It carries out the reaction L-glutamate 5-semialdehyde + NAD(+) + H2O = L-glutamate + NADH + 2 H(+). It functions in the pathway amino-acid degradation; L-proline degradation into L-glutamate; L-glutamate from L-proline: step 2/2. This chain is 1-pyrroline-5-carboxylate dehydrogenase, found in Geobacillus thermodenitrificans (strain NG80-2).